Here is a 187-residue protein sequence, read N- to C-terminus: Large ribosomal subunit protein bL17 (187 aa).

Residues 122–187 form a disordered region; it reads PKVRSSRTST…EADAAEKSDK (66 aa). Over residues 127–144 the composition is skewed to low complexity; that stretch reads SRTSTATAPAAAAPAAEA. Acidic residues-rich tracts occupy residues 145–157 and 165–180; these read PAEESDVPVEETD and TPAETTDEAAAEVEAD.

It belongs to the bacterial ribosomal protein bL17 family. As to quaternary structure, part of the 50S ribosomal subunit. Contacts protein L32.

The protein is Large ribosomal subunit protein bL17 of Clavibacter michiganensis subsp. michiganensis (strain NCPPB 382).